The sequence spans 727 residues: Translation initiation factor IF-2, mitochondrial (727 aa).

The N-terminal 29 residues, 1–29 (MNRKILKLENLLRFHTICRQLHSLCQRRM), are a transit peptide targeting the mitochondrion. The region spanning 178–348 (PRSPVVTIMG…IALAEMLELK (171 aa)) is the tr-type G domain. The tract at residues 187–194 (GHVDHGKT) is G1. Residue 187–194 (GHVDHGKT) participates in GTP binding. A G2 region spans residues 212–216 (GITQH). Residues 234 to 237 (DTPG) and 288 to 291 (NKCD) each bind GTP. A G3 region spans residues 234–237 (DTPG). Positions 288–291 (NKCD) are G4. Positions 324–326 (SAL) are G5. Phosphothreonine is present on Thr688.

This sequence belongs to the TRAFAC class translation factor GTPase superfamily. Classic translation factor GTPase family. IF-2 subfamily. Monomer.

Its subcellular location is the mitochondrion. In terms of biological role, one of the essential components for the initiation of protein synthesis. Protects formylmethionyl-tRNA from spontaneous hydrolysis and promotes its binding to the 30S ribosomal subunits. Also involved in the hydrolysis of GTP during the formation of the 70S ribosomal complex. The protein is Translation initiation factor IF-2, mitochondrial (MTIF2) of Bos taurus (Bovine).